Reading from the N-terminus, the 391-residue chain is Multidrug resistance protein MdtL (391 aa).

The next 12 membrane-spanning stretches (helical) occupy residues Phe-4–Val-24, Ile-42–Ala-62, Pro-69–Glu-89, Leu-93–Phe-113, Leu-131–Met-151, Ser-158–Leu-178, Phe-203–Val-222, Ala-245–Phe-265, Thr-269–Pro-289, Ile-293–Met-313, Ala-324–Ala-346, and Ala-363–Ala-383.

The protein belongs to the major facilitator superfamily. DHA1 family. MdtL (TC 2.A.1.2.22) subfamily.

Its subcellular location is the cell inner membrane. Its function is as follows. Confers resistance to chloramphenicol. The polypeptide is Multidrug resistance protein MdtL (Escherichia fergusonii (strain ATCC 35469 / DSM 13698 / CCUG 18766 / IAM 14443 / JCM 21226 / LMG 7866 / NBRC 102419 / NCTC 12128 / CDC 0568-73)).